Reading from the N-terminus, the 29-residue chain is Cytochrome b6-f complex subunit 8 (29 aa).

A helical membrane pass occupies residues 3–23; the sequence is IVSLAWASLMVVFTFSLSLVV.

Belongs to the PetN family. As to quaternary structure, the 4 large subunits of the cytochrome b6-f complex are cytochrome b6, subunit IV (17 kDa polypeptide, PetD), cytochrome f and the Rieske protein, while the 4 small subunits are PetG, PetL, PetM and PetN. The complex functions as a dimer.

It localises to the plastid. The protein localises to the chloroplast thylakoid membrane. In terms of biological role, component of the cytochrome b6-f complex, which mediates electron transfer between photosystem II (PSII) and photosystem I (PSI), cyclic electron flow around PSI, and state transitions. The chain is Cytochrome b6-f complex subunit 8 from Coffea arabica (Arabian coffee).